A 145-amino-acid polypeptide reads, in one-letter code: MSTQIDLVRRMVEAYNTGKTDDVAEFIHLEYLNPGALEHNPELRGPEAFAAAVTWLKYAFSEEAHLEEIEYEENGPWVRAKLALYGRHVGNLVGMPATGRRFSGEQIHLIRIVDGKIRDHRDWPDYLGTYRQLGEPWPTPEGWRP.

Gln106 lines the substrate pocket.

Belongs to the polyketide cyclase DnrD family. In terms of assembly, homotetramer.

It catalyses the reaction methyl aklanonate = aklaviketone. It participates in antibiotic biosynthesis; daunorubicin biosynthesis. It functions in the pathway antibiotic biosynthesis; carminomycin biosynthesis. The protein operates within antibiotic biosynthesis; rhodomycin biosynthesis. Its pathway is antibiotic biosynthesis; aclacinomycin biosynthesis. In terms of biological role, involved in the biosynthesis of aklavinone which is an important precursor common to the formation of the clinically significant anthracyclines such as carminomycin, daunorubicin (daunomycin), rhodomycin, aclacinomycin T (aklavin) and aclacinomycin A (aclarubicin). These compounds are aromatic polyketide antibiotics that exhibit high cytotoxicity and are widely applied in the chemotherapy of a variety of cancers. Catalyzes the cyclization of aklanonic acid methyl ester to yield aklaviketone presumably via an intramolecular aldol condensation mechanism, although water is not eliminated. The sequence is that of Aklanonic acid methyl ester cyclase DnrD (dnrD) from Streptomyces peucetius.